Consider the following 281-residue polypeptide: N-acetyltransferase ECO1 (281 aa).

A CCHH-type zinc finger spans residues 33-57; sequence VKCDKCEMSYSSTSIEDRAIHEKYH. Residues 86-105 form a disordered region; it reads LSRSTGTITPLNSSPLKKSS. Residues 95 to 105 are compositionally biased toward low complexity; it reads PLNSSPLKKSS. Lysine 223 is subject to N6-acetyllysine; by autocatalysis.

It belongs to the acetyltransferase family. ECO subfamily. In terms of assembly, binds specifically to CHL12, RFC1, RFC2, RFC3, RFC4, RFC5 and RAD24 when members of an RFC complex. Interacts with CHL1 and MPS3. Autoacetylates in vitro.

It is found in the nucleus. Its function is as follows. Required for establishment of sister chromatid cohesion during S phase but not for its further maintenance during G2 or M phases or for loading the cohesin complex onto DNA. Interacts with the three known alternate replication factor C (RFC) complexes, suggesting that these complexes have essential but redundant activity in cohesion establishment. Acts by acetylating the cohesin complex component SMC3. In vitro, possesses acetyltransferase activity where it can acetylate itself and components of the cohesin complex (MCD1, IRR1 and PDS5), but is unable to acetylate histones. The sequence is that of N-acetyltransferase ECO1 (ECO1) from Saccharomyces cerevisiae (strain ATCC 204508 / S288c) (Baker's yeast).